The following is a 513-amino-acid chain: Nitrate transporter 2.2 (513 aa).

A run of 12 helical transmembrane segments spans residues 38–58 (WICF…APVI), 74–94 (VSAV…VDVV), 98–118 (YGAA…ALVT), 128–148 (FFIG…GTMF), 158–178 (AIAA…MPLI), 196–216 (AFFV…LLGI), 247–265 (LGNY…SFGV), 281–301 (FGLN…MNIF), 323–343 (LWVL…MGKV), 351–371 (IVIM…HFGI), 383–403 (VSGL…AIWF), and 419–439 (FVWM…IWFP).

This sequence belongs to the major facilitator superfamily. Nitrate/nitrite porter (TC 2.A.1.8) family.

It localises to the cell membrane. Functionally, involved in nitrate transport, but does not seem to be able to mediate transport by its own. Acts as a dual component transporter with NAR2 (system 2). Involved in a high affinity transport specific for nitrate. The polypeptide is Nitrate transporter 2.2 (Chlamydomonas reinhardtii (Chlamydomonas smithii)).